An 85-amino-acid polypeptide reads, in one-letter code: Small ribosomal subunit protein bS18 (85 aa).

This sequence belongs to the bacterial ribosomal protein bS18 family. In terms of assembly, part of the 30S ribosomal subunit. Forms a tight heterodimer with protein bS6.

Its function is as follows. Binds as a heterodimer with protein bS6 to the central domain of the 16S rRNA, where it helps stabilize the platform of the 30S subunit. This chain is Small ribosomal subunit protein bS18, found in Helicobacter pylori (strain Shi470).